The following is a 342-amino-acid chain: Cytosolic Fe-S cluster assembly factor NBP35 (342 aa).

The segment at 16–42 (SKAAPKLVAPEPEHCPGPESEQAGKGD) is disordered. Positions 30, 44, 47, and 53 each coordinate [4Fe-4S] cluster. 83-90 (GKGGVGKS) is a binding site for ATP. Positions 256 and 259 each coordinate [4Fe-4S] cluster.

This sequence belongs to the Mrp/NBP35 ATP-binding proteins family. NUBP1/NBP35 subfamily. Heterotetramer of 2 NBP35 and 2 CFD1 chains. [4Fe-4S] cluster serves as cofactor.

The protein localises to the cytoplasm. Functionally, component of the cytosolic iron-sulfur (Fe/S) protein assembly (CIA) machinery. Required for maturation of extramitochondrial Fe-S proteins. The NBP35-CFD1 heterotetramer forms a Fe-S scaffold complex, mediating the de novo assembly of an Fe-S cluster and its transfer to target apoproteins. The chain is Cytosolic Fe-S cluster assembly factor NBP35 from Coccidioides immitis (strain RS) (Valley fever fungus).